The sequence spans 241 residues: Small ribosomal subunit protein uS2 (241 aa).

The protein belongs to the universal ribosomal protein uS2 family.

The polypeptide is Small ribosomal subunit protein uS2 (Escherichia coli (strain 55989 / EAEC)).